We begin with the raw amino-acid sequence, 460 residues long: Chromosomal replication initiator protein DnaA 1 (460 aa).

The domain I, interacts with DnaA modulators stretch occupies residues 1-68; sequence MRAWEEFLLL…KSGLVNNNNK (68 aa). Residues 68–102 form a domain II region; that stretch reads KPIRVHVTSVDKAAPFYKEKQMQQEKTAYFTMHYG. Residues 103-321 are domain III, AAA+ region; that stretch reads SVNPEMTFSN…HALNLLAKRV (219 aa). ATP contacts are provided by G151, G153, K154, and T155. The interval 322-460 is domain IV, binds dsDNA; it reads MYKKLSHQLL…EFFPSEEMII (139 aa).

This sequence belongs to the DnaA family. As to quaternary structure, oligomerizes as a right-handed, spiral filament on DNA at oriC.

Its subcellular location is the cytoplasm. Functionally, plays an essential role in the initiation and regulation of chromosomal replication. ATP-DnaA binds to the origin of replication (oriC) to initiate formation of the DNA replication initiation complex once per cell cycle. Binds the DnaA box (a 9 base pair repeat at the origin) and separates the double-stranded (ds)DNA. Forms a right-handed helical filament on oriC DNA; dsDNA binds to the exterior of the filament while single-stranded (ss)DNA is stabiized in the filament's interior. The ATP-DnaA-oriC complex binds and stabilizes one strand of the AT-rich DNA unwinding element (DUE), permitting loading of DNA polymerase. After initiation quickly degrades to an ADP-DnaA complex that is not apt for DNA replication. Binds acidic phospholipids. The sequence is that of Chromosomal replication initiator protein DnaA 1 from Chlamydia pneumoniae (Chlamydophila pneumoniae).